A 515-amino-acid polypeptide reads, in one-letter code: 2-isopropylmalate synthase (515 aa).

The 263-residue stretch at 4–266 (IKFFDTTLRD…ETRLNLQEIK (263 aa)) folds into the Pyruvate carboxyltransferase domain. Residues Asp13, His201, His203, and Asn237 each coordinate Mn(2+). The interval 391-515 (QLSSIQVQYG…RAENEKVTTP (125 aa)) is regulatory domain.

Belongs to the alpha-IPM synthase/homocitrate synthase family. LeuA type 1 subfamily. As to quaternary structure, homodimer. It depends on Mn(2+) as a cofactor.

The protein localises to the cytoplasm. The catalysed reaction is 3-methyl-2-oxobutanoate + acetyl-CoA + H2O = (2S)-2-isopropylmalate + CoA + H(+). It functions in the pathway amino-acid biosynthesis; L-leucine biosynthesis; L-leucine from 3-methyl-2-oxobutanoate: step 1/4. Functionally, catalyzes the condensation of the acetyl group of acetyl-CoA with 3-methyl-2-oxobutanoate (2-ketoisovalerate) to form 3-carboxy-3-hydroxy-4-methylpentanoate (2-isopropylmalate). The sequence is that of 2-isopropylmalate synthase from Geobacillus thermodenitrificans (strain NG80-2).